Consider the following 351-residue polypeptide: L-threonine 3-dehydrogenase (351 aa).

Cysteine 39 contributes to the Zn(2+) binding site. Residues threonine 41 and histidine 44 each act as charge relay system in the active site. 6 residues coordinate Zn(2+): histidine 64, glutamate 65, cysteine 94, cysteine 97, cysteine 100, and cysteine 108. NAD(+) contacts are provided by residues isoleucine 176, aspartate 196, arginine 201, 271–273 (LGI), and 295–296 (IY).

Belongs to the zinc-containing alcohol dehydrogenase family. Homotetramer. The cofactor is Zn(2+).

It is found in the cytoplasm. It carries out the reaction L-threonine + NAD(+) = (2S)-2-amino-3-oxobutanoate + NADH + H(+). It participates in amino-acid degradation; L-threonine degradation via oxydo-reductase pathway; glycine from L-threonine: step 1/2. In terms of biological role, catalyzes the NAD(+)-dependent oxidation of L-threonine to 2-amino-3-ketobutyrate. The polypeptide is L-threonine 3-dehydrogenase (Francisella philomiragia subsp. philomiragia (strain ATCC 25017 / CCUG 19701 / FSC 153 / O#319-036)).